A 509-amino-acid chain; its full sequence is MEIRAAEISKVIKDQIASFGTEAQVSEVGSVLSVGDGIARIHGLDKVQAGEMVEFSNGVKGMALNLEADNVGVVIFGSDSEIKEGDVVKRTGTIVDVPVGKGLLGRVVDALGNPIDGKGPIVDATRQRVEVKAPGIIPRKSVHEPVQTGLKAIDALVPVGRGQRELIIGDRQTGKTAVAIDTFINQKAVNAGTDEGKKLYCIYVAVGQKRSTVAQIVRQLEENGAMEYSIVVAATASEPAPLQYLAPYTGATMGEFFRDNGMHAVIVYDDLSKQAVAYRQMSLLLRRPPGREAYPGDVFYLHSRLLERAAKMNDENGAGSLTALPIIETQAGDVSAYIPTNVISITDGQIFLETGLFYQGIRPAINVGLSVSRVGSSAQTKAMKKVAGSIKLELAQYREMAAFAQFGSDLDASTQKLLNRGARLTELLKQPQFSPLGFEEQTCVIFAGTQGYLDAVPVNRVTEYEAELLSFLRSQHADLLGLIRDTKDLGDEAKGKLVAALDAFAKQFA.

An ATP-binding site is contributed by 169 to 176; it reads GDRQTGKT.

This sequence belongs to the ATPase alpha/beta chains family. As to quaternary structure, F-type ATPases have 2 components, CF(1) - the catalytic core - and CF(0) - the membrane proton channel. CF(1) has five subunits: alpha(3), beta(3), gamma(1), delta(1), epsilon(1). CF(0) has three main subunits: a(1), b(2) and c(9-12). The alpha and beta chains form an alternating ring which encloses part of the gamma chain. CF(1) is attached to CF(0) by a central stalk formed by the gamma and epsilon chains, while a peripheral stalk is formed by the delta and b chains.

The protein localises to the cell inner membrane. It catalyses the reaction ATP + H2O + 4 H(+)(in) = ADP + phosphate + 5 H(+)(out). Functionally, produces ATP from ADP in the presence of a proton gradient across the membrane. The alpha chain is a regulatory subunit. The chain is ATP synthase subunit alpha from Novosphingobium aromaticivorans (strain ATCC 700278 / DSM 12444 / CCUG 56034 / CIP 105152 / NBRC 16084 / F199).